Here is a 266-residue protein sequence, read N- to C-terminus: Energy-coupling factor transporter transmembrane protein EcfT 1 (266 aa).

The next 5 membrane-spanning stretches (helical) occupy residues 33–53 (IGIL…LFTL), 73–93 (LIWL…GGTI), 107–127 (LLNG…STVI), 152–172 (VPVN…PTLM), and 243–263 (HFGD…LVIL).

It belongs to the energy-coupling factor EcfT family. As to quaternary structure, forms a stable energy-coupling factor (ECF) transporter complex composed of 2 membrane-embedded substrate-binding proteins (S component), 2 ATP-binding proteins (A component) and 2 transmembrane proteins (T component). May be able to interact with more than 1 S component at a time.

Its subcellular location is the cell membrane. In terms of biological role, transmembrane (T) component of an energy-coupling factor (ECF) ABC-transporter complex. Unlike classic ABC transporters this ECF transporter provides the energy necessary to transport a number of different substrates. This chain is Energy-coupling factor transporter transmembrane protein EcfT 1, found in Listeria monocytogenes serotype 1/2a (strain 08-5578).